Reading from the N-terminus, the 388-residue chain is Alcohol dehydrogenase patD (388 aa).

Residue cysteine 46 coordinates Zn(2+). NAD(+) is bound at residue histidine 47. The Zn(2+) site is built by histidine 67, glutamate 68, cysteine 101, cysteine 104, and cysteine 112. Histidine 67 is a binding site for substrate. Residues 198–203 (VALSRG), 295–297 (SLL), and 320–322 (EEA) each bind NAD(+).

This sequence belongs to the zinc-containing alcohol dehydrogenase family. The cofactor is Zn(2+).

It is found in the cytoplasm. Its subcellular location is the cytosol. It carries out the reaction neopatulin + NADPH + H(+) = (E)-ascladiol + NADP(+). It functions in the pathway mycotoxin biosynthesis; patulin biosynthesis. Its function is as follows. Alcohol dehydrogenase; part of the gene cluster that mediates the biosynthesis of patulin, an acetate-derived tetraketide mycotoxin produced by several fungal species that shows antimicrobial properties against several bacteria. PatD catalyzes the conversion of neopatulin into E-ascladiol. The pathway begins with the synthesis of 6-methylsalicylic acid by the polyketide synthase (PKS) patK via condensation of acetate and malonate units. The 6-methylsalicylic acid decarboxylase patG then catalyzes the decarboxylation of 6-methylsalicylic acid to yield m-cresol (also known as 3-methylphenol). These first reactions occur in the cytosol. The intermediate m-cresol is then transported into the endoplasmic reticulum where the cytochrome P450 monooxygenase patH converts it to m-hydroxybenzyl alcohol, which is further converted to gentisyl alcohol by the cytochrome P450 monooxygenase patI. The oxidoreductases patJ and patO further convert gentisyl alcohol to isoepoxydon in the vacuole. PatN catalyzes then the transformation of isoepoxydon into phyllostine. The cluster protein patF is responsible for the conversion from phyllostine to neopatulin whereas the alcohol dehydrogenase patD converts neopatulin to E-ascladiol. The steps between isoepoxydon and E-ascladiol occur in the cytosol, and E-ascladiol is probably secreted to the extracellular space by one of the cluster-specific transporters patC or patM. Finally, the secreted patulin synthase patE catalyzes the conversion of E-ascladiol to patulin. This chain is Alcohol dehydrogenase patD, found in Aspergillus clavatus (strain ATCC 1007 / CBS 513.65 / DSM 816 / NCTC 3887 / NRRL 1 / QM 1276 / 107).